Consider the following 424-residue polypeptide: MQKFRVYGQSRLNGEVNISGAKNAALPILFAAILAEEPVKLTNVPELKDIDTTLKILQQLGVVTYRDEQGAVHLDASNINHFVAPYELVKTMRASIWALAPLVSRFKQGQVSLPGGCSIGARPVDLHISGLERLGAKIVLEEGYVKAFVDGQLIGKRIVIEKVSVGATLSIMIAATLAKGITVIENAAREPEITDTAVFLNKMGAKISGAGSDIITIEGVERLGGCEHSIVPDRIETGTFLVAAAISGGRIICKNTKASTLDAVIDKLRDAGAKIEVTENTITLDMQGNRPKAVNIRTEPYPGFPTDMQAQFTLLNMVAEGSSKITETIFENRFMHIPELIRMGGKAEIEGNTAFCHGVEYLSGAEVMATDLRASISLVLAGCIATGETIVDRIYHIDRGYEHIEKKLRGLGAKIERFTEKIVD.

22–23 is a phosphoenolpyruvate binding site; it reads KN. Arg93 lines the UDP-N-acetyl-alpha-D-glucosamine pocket. Cys117 serves as the catalytic Proton donor. Cys117 bears the 2-(S-cysteinyl)pyruvic acid O-phosphothioketal mark. Residues 122–126, 162–165, Asp307, and Ile329 each bind UDP-N-acetyl-alpha-D-glucosamine; these read RPVDL and KVSV.

Belongs to the EPSP synthase family. MurA subfamily.

The protein localises to the cytoplasm. It catalyses the reaction phosphoenolpyruvate + UDP-N-acetyl-alpha-D-glucosamine = UDP-N-acetyl-3-O-(1-carboxyvinyl)-alpha-D-glucosamine + phosphate. Its pathway is cell wall biogenesis; peptidoglycan biosynthesis. Functionally, cell wall formation. Adds enolpyruvyl to UDP-N-acetylglucosamine. The chain is UDP-N-acetylglucosamine 1-carboxyvinyltransferase from Histophilus somni (strain 129Pt) (Haemophilus somnus).